The sequence spans 209 residues: ATP-dependent Clp protease proteolytic subunit 2 (209 aa).

Ser106 acts as the Nucleophile in catalysis. The active site involves His131.

Belongs to the peptidase S14 family. Fourteen ClpP subunits assemble into 2 heptameric rings which stack back to back to give a disk-like structure with a central cavity, resembling the structure of eukaryotic proteasomes.

It is found in the cytoplasm. The enzyme catalyses Hydrolysis of proteins to small peptides in the presence of ATP and magnesium. alpha-casein is the usual test substrate. In the absence of ATP, only oligopeptides shorter than five residues are hydrolyzed (such as succinyl-Leu-Tyr-|-NHMec, and Leu-Tyr-Leu-|-Tyr-Trp, in which cleavage of the -Tyr-|-Leu- and -Tyr-|-Trp bonds also occurs).. In terms of biological role, cleaves peptides in various proteins in a process that requires ATP hydrolysis. Has a chymotrypsin-like activity. Plays a major role in the degradation of misfolded proteins. In Rhizobium etli (strain ATCC 51251 / DSM 11541 / JCM 21823 / NBRC 15573 / CFN 42), this protein is ATP-dependent Clp protease proteolytic subunit 2.